Here is a 375-residue protein sequence, read N- to C-terminus: 23S rRNA (uracil(747)-C(5))-methyltransferase RlmC (375 aa).

Residues C3, C11, C14, and C87 each coordinate [4Fe-4S] cluster. Residues Q212, F241, E262, and N307 each contribute to the S-adenosyl-L-methionine site. Catalysis depends on C334, which acts as the Nucleophile.

This sequence belongs to the class I-like SAM-binding methyltransferase superfamily. RNA M5U methyltransferase family. RlmC subfamily.

The enzyme catalyses uridine(747) in 23S rRNA + S-adenosyl-L-methionine = 5-methyluridine(747) in 23S rRNA + S-adenosyl-L-homocysteine + H(+). Catalyzes the formation of 5-methyl-uridine at position 747 (m5U747) in 23S rRNA. The protein is 23S rRNA (uracil(747)-C(5))-methyltransferase RlmC of Salmonella typhi.